We begin with the raw amino-acid sequence, 309 residues long: Carbamate kinase 3 (309 aa).

The protein belongs to the carbamate kinase family.

The protein resides in the cytoplasm. The enzyme catalyses hydrogencarbonate + NH4(+) + ATP = carbamoyl phosphate + ADP + H2O + H(+). It functions in the pathway metabolic intermediate metabolism; carbamoyl phosphate degradation; CO(2) and NH(3) from carbamoyl phosphate: step 1/1. The chain is Carbamate kinase 3 (arcC3) from Staphylococcus aureus (strain USA300).